The primary structure comprises 70 residues: DNA-directed RNA polymerase subunit epsilon (70 aa).

This sequence belongs to the RNA polymerase subunit epsilon family. As to quaternary structure, RNAP is composed of a core of 2 alpha, a beta and a beta' subunit. The core is associated with a delta subunit, and at least one of epsilon or omega. When a sigma factor is associated with the core the holoenzyme is formed, which can initiate transcription.

It catalyses the reaction RNA(n) + a ribonucleoside 5'-triphosphate = RNA(n+1) + diphosphate. A non-essential component of RNA polymerase (RNAP). This chain is DNA-directed RNA polymerase subunit epsilon, found in Limosilactobacillus reuteri (strain DSM 20016) (Lactobacillus reuteri).